The primary structure comprises 122 residues: Cytochrome c-556 (122 aa).

Heme contacts are provided by methionine 11, cysteine 111, cysteine 114, and histidine 115. Heme c is bound by residues methionine 11, cysteine 111, cysteine 114, and histidine 115.

Monomer. In terms of processing, binds 1 heme c group covalently per subunit.

Functionally, low-spin monoheme cytochrome c. In Agrobacterium tumefaciens (strain B2A), this protein is Cytochrome c-556.